The chain runs to 529 residues: DEP domain-containing protein 1B (529 aa).

In terms of domain architecture, DEP spans 24–108 (FRARMPLRRH…DNRHLYRFPP (85 aa)). At S160 the chain carries Phosphoserine. The Rho-GAP domain occupies 201–393 (DSLEEVLNTK…FLMDNYQEIL (193 aa)). Phosphoserine is present on S436.

This is DEP domain-containing protein 1B (Depdc1b) from Mus musculus (Mouse).